An 821-amino-acid chain; its full sequence is Integrator complex assembly factor BRAT1 (821 aa).

The required for interaction with NDFIP1 stretch occupies residues 100 to 200; it reads PGLFGEPGPL…WPACAQKIMD (101 aa). HEAT repeat units lie at residues 495–531 and 544–576; these read PQFL…SRHW and SEVP…SSQG. The segment at 741 to 767 is disordered; sequence GSPNTASAEATLPRWRAGEQAQPPGDQ. Residue serine 742 is modified to Phosphoserine. Positions 819 to 821 match the BRAT1-like motif motif; that stretch reads DCY. Zn(2+) is bound at residue cysteine 820.

It belongs to the BRAT1 family. Part of the multiprotein complex composed of BRAT1, WDR73, as well as integrator complex subunits INTS9 and INTS11. Interacts with BRCA1 and ATM. Interacts with MTOR and RPTOR. Interacts with NDFIP1. Interacts with SMC1A and PRKDC. Ubiquitinated by NEDD4, NEDD4L and ITCH; mono- and polyubiquitinated forms are detected. Ubiquitously expressed.

It localises to the nucleus. The protein localises to the cytoplasm. Component of a multiprotein complex required for the assembly of the RNA endonuclease module of the integrator complex. Associates with INTS9 and INTS11 in the cytoplasm and blocks the active site of INTS11 to inhibit the endonuclease activity of INTS11 before formation of the full integrator complex. Following dissociation of WDR73 of the complex, BRAT1 facilitates the nuclear import of the INTS9-INTS11 heterodimer. In the nucleus, INTS4 is integrated to the INTS9-INTS11 heterodimer and BRAT1 is released from the mature RNA endonuclease module by inositol hexakisphosphate (InsP6). BRAT1 is also involved in DNA damage response; activates kinases ATM, SMC1A and PRKDC by modulating their phosphorylation status following ionizing radiation (IR) stress. Plays a role in regulating mitochondrial function and cell proliferation. Required for protein stability of MTOR and MTOR-related proteins, and cell cycle progress by growth factors. In Homo sapiens (Human), this protein is Integrator complex assembly factor BRAT1.